We begin with the raw amino-acid sequence, 511 residues long: MKFFLLLFTIGFCWAQYSPNTQQGRTSIVHLFEWRWVDIALECERYLAPKGFGGVQVSPPNENVAIHNPFRPWWERYQPVSYKLCTRSGNEDEFRNMVTRCNNVGVRIYVDAVINHMSGNAVSAGTSSTCGSYFNPGSRDFPAVPYSGWDFNDGKCKTGSGDIENYNDATQVRDCRLVGLLDLALEKDYVRSKIAEYMNHLIDIGVAGFRLDASKHMWPGDIKAILDKLHNLNSNWFPAGSKPFIYQEVIDLGGEPIKSSDYFGNGRVTEFKYGAKLGTVIRKWNGEKMSYLKNWGEGWGFMPSDRALVFVDNHDNQRGHGAGGASILTFWDARLYKMAVGFMLAHPYGFTRVMSSYRWPRQFQNGNDVNDWVGPPNNNGVIKEVTINPDTTCGNDWVCEHRWRQIRNMVNFRNVVDGQPFTNWYDNGSNQVAFGRGNRGFIVFNNDDWTFSLTLQTGLPAGTYCDVISGDKINGNCTGIKIYVSDDGKAHFSISNSAEDPFIAIHAESKL.

An N-terminal signal peptide occupies residues Met1–Ala15. Pyrrolidone carboxylic acid is present on Gln16. 3 disulfide bridges follow: Cys43–Cys101, Cys85–Cys130, and Cys156–Cys175. Ca(2+) contacts are provided by Asn115, Arg173, and Asp182. Position 210 (Arg210) interacts with chloride. Asp212 functions as the Nucleophile in the catalytic mechanism. His216 is a binding site for Ca(2+). Glu248 functions as the Proton donor in the catalytic mechanism. Residues Asn313 and Arg352 each contribute to the chloride site. 2 cysteine pairs are disulfide-bonded: Cys393/Cys399 and Cys465/Cys477.

It belongs to the glycosyl hydrolase 13 family. In terms of assembly, monomer. Ca(2+) serves as cofactor. It depends on chloride as a cofactor.

It is found in the secreted. It carries out the reaction Endohydrolysis of (1-&gt;4)-alpha-D-glucosidic linkages in polysaccharides containing three or more (1-&gt;4)-alpha-linked D-glucose units.. The sequence is that of Alpha-amylase 2B (AMY2B) from Homo sapiens (Human).